The following is a 212-amino-acid chain: MNRKKLQKLTDTLTKNCKHFDKFEVKCLITLFYNLVGDVAERPGVVTGLDRNVFRNILHVTFGMTDDMIMDRVFRGFDKDNDGCISVSEWIHGLSLFLRGTLDEKMKYCFEVFDLNGDGFISKEEMFHMLKNSLLKQPSEEDPDEGIKDLVEITLKKMDHDHDGKLSFVDYEKAVREENLLLEAFGPCLPDPKSQMEFEAQVFKDPNEFNDM.

3 EF-hand domains span residues 65–100, 101–136, and 146–181; these read TDDM…FLRG, TLDE…SLLK, and GIKD…ENLL. The Ca(2+) site is built by aspartate 78, aspartate 80, aspartate 82, cysteine 84, glutamate 89, aspartate 114, asparagine 116, aspartate 118, glutamate 125, aspartate 159, aspartate 161, aspartate 163, lysine 165, and aspartate 170.

Component of the outer dynein arm-docking complex along with ODAD1, ODAD2, ODAD3 and ODAD4.

It localises to the cytoplasm. The protein resides in the cytoskeleton. Its subcellular location is the cilium axoneme. It is found in the cell projection. The protein localises to the cilium. It localises to the flagellum. Its function is as follows. Component of the outer dynein arm-docking complex (ODA-DC) that mediates outer dynein arms (ODA) binding onto the doublet microtubule. Seems to regulate the assembly of both ODAs and their axonemal docking complex onto ciliary microtubules. Regulates ciliary and flagellar motility and is required for cilia-driven determination of body laterality. This is Calaxin (Clxn) from Mus musculus (Mouse).